The sequence spans 977 residues: MASTASYSPSPTSQWRTQKLPKRFNFYVIHNQEFGKLSQSSSLPTSSFPKTLKLPVIQMPINNNIQSQTTVCVSTDENLEELVNLQKIANGVLTKESNKRVFIQDPPWVSSLFMNSLFVRAKQVQGVRREFREIERRRRYAMLRRRQIKAETEAWEQMVEEYRELEREMCEKKLAPNLPYVKKLLLGWFEPLRQAIEKEQNAETTVKHRAAFAPHIDSLPADKMAVIVMHKLMGLLMMGGKEERCVQVVQAAVQIGMAVENEVRIHNFLEKTKKLQKHMTGAQSQEDMSRETMILRKRVKSLIKRNRVVEVRKLMKSEEPESWGRDTQAKLGCRLLELLTETAYVQPPVDQSADTPPDIRPAFRHVFRIATRDPGKSIVKKYGVIECDPLVVAGVDRTVKQMMIPYVPMLVPPKKWRGYDKGGYLFLPSYLMRTHGSRRQQDAVRSVPTKQMQQVYEALDTLGSTKWRVNKRILSVVESIWAGGGNIAGLVDRKDVPIPELHSDDIMEVKKWKWRVRKSKKINQELHSQRCDTELKLSVARKLKDEEGFYYPHNLDFRGRAYPMHPHLNHLSSDLCRGILEFAEGRPLGKSGLRWLKIHLASLYAGGIEKLCYDARLAFVENHIDDILDSANNPLNGNRWWLNAEDPFQCLAACINLSEALKSSSPHTVFSHLPIHQDGSCNGLQHYAALGRDSMEAAAVNLVAGDKPADVYTEIALRVDHIIRGDSIKDPATDPNALLAKLLIDQVDRKLVKQTVMTSVYGVTYVGAREQIKRRLEEKGLIDDDRLLFTASCYAAKVTLAALGELFQAARGTMTWLGDCAKVIASENQPVRWTTPLGLPVVQPYFKTQRHVIRTSLQVLALQREGDTVEVRKQRTAFPPNFVHSLDGSHMMMTAVACRDAGLQFAGVHDSFWTHACDVDQMNRILREKFVELYSMPILEDLLESFQNSYPALTFPPLPKRGDFDLVEVLESPYFFN.

A chloroplast-targeting transit peptide spans 1 to 72; sequence MASTASYSPS…NNIQSQTTVC (72 aa). Active-site residues include D678, K753, and D910.

It belongs to the phage and mitochondrial RNA polymerase family.

The protein resides in the plastid. It localises to the chloroplast. The enzyme catalyses RNA(n) + a ribonucleoside 5'-triphosphate = RNA(n+1) + diphosphate. DNA-dependent RNA polymerase catalyzes the transcription of DNA into RNA using the four ribonucleoside triphosphates as substrates. In Nicotiana tabacum (Common tobacco), this protein is DNA-directed RNA polymerase 3A, chloroplastic (RPOT3-SYL).